A 79-amino-acid chain; its full sequence is Acyl carrier protein (79 aa).

In terms of domain architecture, Carrier spans Gln-3–Lys-78. An O-(pantetheine 4'-phosphoryl)serine modification is found at Ser-38.

The protein belongs to the acyl carrier protein (ACP) family. 4'-phosphopantetheine is transferred from CoA to a specific serine of apo-ACP by AcpS. This modification is essential for activity because fatty acids are bound in thioester linkage to the sulfhydryl of the prosthetic group.

It localises to the cytoplasm. The protein operates within lipid metabolism; fatty acid biosynthesis. Functionally, carrier of the growing fatty acid chain in fatty acid biosynthesis. This Prochlorococcus marinus (strain MIT 9312) protein is Acyl carrier protein.